We begin with the raw amino-acid sequence, 397 residues long: Elongation factor Tu (397 aa).

Residues 10–206 form the tr-type G domain; sequence KPHVNIGTIG…AVDEAIPTPP (197 aa). The interval 19-26 is G1; that stretch reads GHIDHGKT. 19–26 contributes to the GTP binding site; that stretch reads GHIDHGKT. Position 26 (threonine 26) interacts with Mg(2+). The interval 62–66 is G2; sequence GITIS. The G3 stretch occupies residues 83 to 86; sequence DCPG. Residues 83–87 and 138–141 contribute to the GTP site; these read DCPGH and NKAD. The tract at residues 138–141 is G4; the sequence is NKAD. A G5 region spans residues 176 to 178; that stretch reads SAL.

It belongs to the TRAFAC class translation factor GTPase superfamily. Classic translation factor GTPase family. EF-Tu/EF-1A subfamily. Monomer.

It is found in the cytoplasm. The enzyme catalyses GTP + H2O = GDP + phosphate + H(+). In terms of biological role, GTP hydrolase that promotes the GTP-dependent binding of aminoacyl-tRNA to the A-site of ribosomes during protein biosynthesis. The protein is Elongation factor Tu of Kitasatospora aureofaciens (Streptomyces aureofaciens).